The chain runs to 101 residues: Precursor of CEP6 (101 aa).

A signal peptide spans 1 to 26; the sequence is MKLSVYIILSILFISTVFYEIQFTEA. The propeptide occupies 27–48; the sequence is RQLRKTDDQDHDDHHFTVGYTD. Residues 29–42 show a composition bias toward basic and acidic residues; the sequence is LRKTDDQDHDDHHF. Residues 29–101 are disordered; it reads LRKTDDQDHD…HAVKNNEPNA (73 aa). A hydroxyproline mark is found at proline 52, proline 55, and proline 59. The propeptide occupies 64–77; the sequence is KMKENEENAGGYKD. Over residues 64–79 the composition is skewed to basic and acidic residues; the sequence is KMKENEENAGGYKDDF. A hydroxyproline mark is found at proline 81, proline 84, and proline 88. The propeptide occupies 93–101; that stretch reads AVKNNEPNA.

Belongs to the C-terminally encoded plant signaling peptide (CEP) family. Interacts with CEP receptors (e.g. CEPR1 and CEPR2). The mature small signaling peptide is generated by proteolytic processing of the longer precursor. Expressed in lateral root primordia and in lateral roots excluding the meristem region. Also present in the aerial tissues, such as leaf petioles and the shoot apex region.

Its subcellular location is the secreted. It localises to the extracellular space. It is found in the apoplast. Its function is as follows. Extracellular signaling peptide that represses primary root growth rate. Modulates leaf morphology. Regulates systemic nitrogen (N)-demand signaling. Mediates up-regulation of genes involved in N uptake and assimilation pathways. In Arabidopsis thaliana (Mouse-ear cress), this protein is Precursor of CEP6.